Here is a 494-residue protein sequence, read N- to C-terminus: Putative transporter SVOPL (494 aa).

The next 10 membrane-spanning stretches (helical) occupy residues 48-68 (IALF…IMLI), 86-106 (VAFV…LFGL), 121-141 (FLWG…IWFV), 179-199 (VFWL…IPTI), 203-223 (WLIR…KFIP), 281-301 (TLQI…VILA), 350-370 (IIST…INFL), 385-405 (LFFL…FLFM), 431-451 (AIGM…APFI), and 460-480 (FLGA…SAFT).

The protein belongs to the major facilitator superfamily.

The protein localises to the membrane. The protein is Putative transporter SVOPL (Svopl) of Mus musculus (Mouse).